Reading from the N-terminus, the 353-residue chain is Photosystem II protein D1 (353 aa).

T2 is subject to N-acetylthreonine. A Phosphothreonine modification is found at T2. The next 3 helical transmembrane spans lie at 29–46 (YIGWFGVIMIPTLLTATS), 118–133 (HFFLGICCYMGREWEL), and 142–156 (WIAVAYSAPVAAATA). H118 is a binding site for chlorophyll a. A pheophytin a-binding site is contributed by Y126. 2 residues coordinate [CaMn4O5] cluster: D170 and E189. The helical transmembrane segment at 197 to 218 (FHMLGVAGVFGGSLFSAMHGSL) threads the bilayer. H198 provides a ligand contact to chlorophyll a. A quinone contacts are provided by residues H215 and 264 to 265 (SF). H215 provides a ligand contact to Fe cation. H272 contributes to the Fe cation binding site. The helical transmembrane segment at 274 to 288 (FLAAWPVVGIWFTAL) threads the bilayer. [CaMn4O5] cluster-binding residues include H332, E333, D342, and A344. Residues 345–353 (SVEAPSVNA) constitute a propeptide that is removed on maturation.

It belongs to the reaction center PufL/M/PsbA/D family. In terms of assembly, PSII is composed of 1 copy each of membrane proteins PsbA, PsbB, PsbC, PsbD, PsbE, PsbF, PsbH, PsbI, PsbJ, PsbK, PsbL, PsbM, PsbT, PsbX, PsbY, PsbZ, Psb30/Ycf12, at least 3 peripheral proteins of the oxygen-evolving complex and a large number of cofactors. It forms dimeric complexes. The D1/D2 heterodimer binds P680, chlorophylls that are the primary electron donor of PSII, and subsequent electron acceptors. It shares a non-heme iron and each subunit binds pheophytin, quinone, additional chlorophylls, carotenoids and lipids. D1 provides most of the ligands for the Mn4-Ca-O5 cluster of the oxygen-evolving complex (OEC). There is also a Cl(-1) ion associated with D1 and D2, which is required for oxygen evolution. The PSII complex binds additional chlorophylls, carotenoids and specific lipids. is required as a cofactor. In terms of processing, the 9 C-terminal residues are removed, probably by CTPA (AC O04073); processing is essential to allow assembly of the oxygen-evolving complex and thus photosynthetic growth. Tyr-161 forms a radical intermediate that is referred to as redox-active TyrZ, YZ or Y-Z.

The protein resides in the plastid. It is found in the chloroplast thylakoid membrane. It catalyses the reaction 2 a plastoquinone + 4 hnu + 2 H2O = 2 a plastoquinol + O2. Photosystem II (PSII) is a light-driven water:plastoquinone oxidoreductase that uses light energy to abstract electrons from H(2)O, generating O(2) and a proton gradient subsequently used for ATP formation. It consists of a core antenna complex that captures photons, and an electron transfer chain that converts photonic excitation into a charge separation. The D1/D2 (PsbA/PsbD) reaction center heterodimer binds P680, the primary electron donor of PSII as well as several subsequent electron acceptors. The sequence is that of Photosystem II protein D1 from Tetradesmus obliquus (Green alga).